Reading from the N-terminus, the 471-residue chain is ATP synthase subunit beta, chloroplastic (471 aa).

An ATP-binding site is contributed by Gly-151–Thr-158.

This sequence belongs to the ATPase alpha/beta chains family. In terms of assembly, F-type ATPases have 2 components, CF(1) - the catalytic core - and CF(0) - the membrane proton channel. CF(1) has five subunits: alpha(3), beta(3), gamma(1), delta(1), epsilon(1). CF(0) has four main subunits: a(1), b(1), b'(1) and c(9-12).

It localises to the plastid. It is found in the chloroplast thylakoid membrane. The enzyme catalyses ATP + H2O + 4 H(+)(in) = ADP + phosphate + 5 H(+)(out). In terms of biological role, produces ATP from ADP in the presence of a proton gradient across the membrane. The catalytic sites are hosted primarily by the beta subunits. The chain is ATP synthase subunit beta, chloroplastic from Rhodomonas salina (Cryptomonas salina).